Consider the following 448-residue polypeptide: C4-dicarboxylate transport protein (448 aa).

A run of 7 helical transmembrane segments spans residues 22–42 (FQVVVAIVLGALLGHFEPAFA), 55–75 (LVKMIIAPVIFLTIVTGIAGM), 90–110 (TYFLFFSTLALIVGMVVAHVV), 137–157 (ELSLVGFLMDIIPATLISAFV), 159–179 (GNILQVLFVAVLFGIALALVG), 199–219 (LVHMLMKAAPIGAFGAIAFTI), and 232–252 (WLVGSFYLTSLFFVLVILGIV). Residues 428 to 448 (RAPPLQAPVPPPDAVAPVSAR) form a disordered region. Residues 432–441 (LQAPVPPPDA) are compositionally biased toward pro residues.

It belongs to the dicarboxylate/amino acid:cation symporter (DAACS) (TC 2.A.23) family.

It is found in the cell inner membrane. Responsible for the transport of dicarboxylates such as succinate, fumarate, and malate from the periplasm across the membrane. This Xanthomonas campestris pv. campestris (strain 8004) protein is C4-dicarboxylate transport protein.